Reading from the N-terminus, the 260-residue chain is DNA import protein CedA (260 aa).

Helical transmembrane passes span 13-33, 47-67, 110-130, 140-160, 169-189, and 220-240; these read LLAS…VPVY, IYVV…GELL, ALIQ…ALTF, IVYQ…SIPF, AFIG…QFLA, and IITS…GFSM.

Forms a complex composed of CedA, CedA1 and CedA2.

Its subcellular location is the cell membrane. Part of the Ced system, which is involved in DNA import. This chain is DNA import protein CedA, found in Sulfolobus acidocaldarius (strain ATCC 33909 / DSM 639 / JCM 8929 / NBRC 15157 / NCIMB 11770).